A 117-amino-acid polypeptide reads, in one-letter code: UPF0295 protein GTNG_0491 (117 aa).

Helical transmembrane passes span 12–32 (IRTF…LGLF) and 42–62 (LFMV…FWIG).

It belongs to the UPF0295 family.

It is found in the cell membrane. In Geobacillus thermodenitrificans (strain NG80-2), this protein is UPF0295 protein GTNG_0491.